Reading from the N-terminus, the 470-residue chain is Argininosuccinate lyase (470 aa).

This sequence belongs to the lyase 1 family. Argininosuccinate lyase subfamily.

Its subcellular location is the cytoplasm. The enzyme catalyses 2-(N(omega)-L-arginino)succinate = fumarate + L-arginine. It functions in the pathway amino-acid biosynthesis; L-arginine biosynthesis; L-arginine from L-ornithine and carbamoyl phosphate: step 3/3. This chain is Argininosuccinate lyase, found in Mycobacterium sp. (strain MCS).